The sequence spans 1355 residues: Collagen alpha-2(I) chain (1355 aa).

An N-terminal signal peptide occupies residues 1–22; it reads MLSFVDLRSVLLLAVTLYLVTC. Gln-23 is modified (pyrrolidone carboxylic acid). Residues 23 to 71 constitute a propeptide, N-terminal propeptide; that stretch reads QEVRRGPRGDKGPPGEQGPPGIPGRDGEDGLPGLPGPPGVPGLGGNFAA. The span at 26 to 35 shows a compositional bias: basic and acidic residues; sequence RRGPRGDKGP. Positions 26–1111 are disordered; that stretch reads RRGPRGDKGP…GDGGEYYRAD (1086 aa). The residue at position 72 (Gln-72) is a Pyrrolidone carboxylic acid. Allysine is present on Lys-77. Over residues 99 to 108 the composition is skewed to low complexity; it reads PGSQGFQGLP. The segment covering 132–146 has biased composition (basic and acidic residues); the sequence is AGEDGHPGKSGRPGE. A 5-hydroxylysine; alternate modification is found at Lys-168. Lys-168 is a glycosylation site (O-linked (Gal...) hydroxylysine; alternate). Residues 218-267 show a composition bias toward low complexity; the sequence is PAGSAGSRGSDGSSGPVGPAGPIGSAGAPGLPGAPGAKGELGPAGNNGPT. Pro residues predominate over residues 276–290; that stretch reads PGPPGSLGPAGPPGN. The segment covering 291 to 303 has biased composition (low complexity); sequence PGTNGVNGAKGTA. The segment covering 304-322 has biased composition (gly residues); the sequence is GLPGVGGAPGLPGGRGIPG. A compositionally biased stretch (low complexity) spans 327–336; it reads AGPSGARGLA. Composition is skewed to gly residues over residues 340-349 and 403-412; these read GIAGGKGDTG and GRAGGIGPAG. Composition is skewed to low complexity over residues 413–426 and 465–495; these read SRGSSGPPGARGPN and EGRSGAAGPAGARGEPGAIGFPGPKGPNGEP. 2 stretches are compositionally biased toward gly residues: residues 523 to 532 and 586 to 595; these read GPAGLGGATG and GESGGAGPHG. The span at 596–618 shows a compositional bias: low complexity; that stretch reads PSGSRGPSGAPGPDGQKGEPGAA. Gly residues predominate over residues 619–628; the sequence is GLNGGLGPSG. Composition is skewed to low complexity over residues 659 to 675, 687 to 701, and 708 to 726; these read NPGRDGARGPAGAAGAP, SGPAGPSGVAGPRGA, and AGPAGPTGFAGPPGAAGHT. Basic and acidic residues predominate over residues 728-738; sequence AKGDRGAKGPK. Low complexity-rich tracts occupy residues 741 to 767 and 776 to 788; these read AGSPGPLGAHGSAGPAGPNGPAGSTGA and ATGFPGPAGRAGA. Basic and acidic residues predominate over residues 804 to 813; it reads PGKDGSRGPR. The span at 852–869 shows a compositional bias: low complexity; it reads AGPSGVLGARGILGLPGT. Over residues 874–883 the composition is skewed to gly residues; the sequence is GLPGGPGSNG. Low complexity-rich tracts occupy residues 884–912 and 947–966; these read EPGPSGLAGSSGPRGPPGSVGSPGPVGHS and PSGLAGAPGPAGSAGPAGKS. Over residues 967–976 the composition is skewed to gly residues; that stretch reads GNRGEGGPSG. The span at 996-1014 shows a compositional bias: basic and acidic residues; that stretch reads RGDKGEAGERGARGLDGRK. Residues 1019–1041 show a composition bias toward low complexity; sequence LSGLPGPSGTPGETGPSGSVGPV. The segment covering 1080 to 1091 has biased composition (pro residues); it reads AGPPGPPGPPGH. Residues 1093–1105 show a composition bias toward gly residues; that stretch reads GPSGGGYDGGDGG. Residues 1111–1355 constitute a propeptide, C-terminal propeptide; that stretch reads DQPERKPKDY…GFEIGPVCFK (245 aa). The Fibrillar collagen NC1 domain maps to 1120–1355; that stretch reads YEVDATLKSL…GFEIGPVCFK (236 aa). Disulfide bonds link Cys-1150–Cys-1182, Cys-1190–Cys-1353, and Cys-1261–Cys-1306. Positions 1168, 1170, 1171, 1173, and 1176 each coordinate Ca(2+). N-linked (GlcNAc...) asparagine glycans are attached at residues Asn-1206 and Asn-1256.

This sequence belongs to the fibrillar collagen family. As to quaternary structure, trimers of one alpha 2(I) and two alpha 1(I) chains. In terms of processing, prolines at the third position of the tripeptide repeating unit (G-X-Y) are hydroxylated in some or all of the chains. Forms the fibrils of tendon, ligaments and bones. In bones the fibrils are mineralized with calcium hydroxyapatite.

Its subcellular location is the secreted. The protein resides in the extracellular space. It localises to the extracellular matrix. Functionally, type I collagen is a member of group I collagen (fibrillar forming collagen). In Aquarana catesbeiana (American bullfrog), this protein is Collagen alpha-2(I) chain (COL1A2).